The chain runs to 608 residues: Glutamyl-tRNA(Gln) amidotransferase subunit E (608 aa).

A disordered region spans residues 401 to 428 (PEETRAANPDGTTRFLRPRPGAARMYPE).

The protein belongs to the GatB/GatE family. GatE subfamily. As to quaternary structure, heterodimer of GatD and GatE.

The catalysed reaction is L-glutamyl-tRNA(Gln) + L-glutamine + ATP + H2O = L-glutaminyl-tRNA(Gln) + L-glutamate + ADP + phosphate + H(+). Functionally, allows the formation of correctly charged Gln-tRNA(Gln) through the transamidation of misacylated Glu-tRNA(Gln) in organisms which lack glutaminyl-tRNA synthetase. The reaction takes place in the presence of glutamine and ATP through an activated gamma-phospho-Glu-tRNA(Gln). The GatDE system is specific for glutamate and does not act on aspartate. The chain is Glutamyl-tRNA(Gln) amidotransferase subunit E from Pyrobaculum arsenaticum (strain DSM 13514 / JCM 11321 / PZ6).